Here is a 363-residue protein sequence, read N- to C-terminus: Protein RecA (363 aa).

ATP is bound at residue 79–86 (GPESSGKT).

This sequence belongs to the RecA family.

The protein resides in the cytoplasm. Functionally, can catalyze the hydrolysis of ATP in the presence of single-stranded DNA, the ATP-dependent uptake of single-stranded DNA by duplex DNA, and the ATP-dependent hybridization of homologous single-stranded DNAs. It interacts with LexA causing its activation and leading to its autocatalytic cleavage. The sequence is that of Protein RecA from Borrelia turicatae (strain 91E135).